A 271-amino-acid chain; its full sequence is Aminodeoxychorismate lyase (271 aa).

Position 140 is an N6-(pyridoxal phosphate)lysine (Lys-140).

This sequence belongs to the class-IV pyridoxal-phosphate-dependent aminotransferase family. As to quaternary structure, homodimer. It depends on pyridoxal 5'-phosphate as a cofactor.

The enzyme catalyses 4-amino-4-deoxychorismate = 4-aminobenzoate + pyruvate + H(+). It participates in cofactor biosynthesis; tetrahydrofolate biosynthesis; 4-aminobenzoate from chorismate: step 2/2. Its function is as follows. Involved in the biosynthesis of p-aminobenzoate (PABA), a precursor of tetrahydrofolate. Converts 4-amino-4-deoxychorismate into 4-aminobenzoate (PABA) and pyruvate. The protein is Aminodeoxychorismate lyase (pabC) of Vibrio harveyi (Beneckea harveyi).